The chain runs to 349 residues: tRNA pseudouridine synthase D (349 aa).

A substrate-binding site is contributed by Phe-27. Asp-80 (nucleophile) is an active-site residue. Asn-129 contributes to the substrate binding site. The 149-residue stretch at 155–303 folds into the TRUD domain; that stretch reads GVPNYFGAQR…VEAARRAMLL (149 aa). Phe-329 lines the substrate pocket.

Belongs to the pseudouridine synthase TruD family.

It carries out the reaction uridine(13) in tRNA = pseudouridine(13) in tRNA. In terms of biological role, responsible for synthesis of pseudouridine from uracil-13 in transfer RNAs. The sequence is that of tRNA pseudouridine synthase D from Escherichia coli O9:H4 (strain HS).